Here is a 174-residue protein sequence, read N- to C-terminus: Eukaryotic translation elongation factor 1 epsilon-1 (174 aa).

Ala2 carries the post-translational modification N-acetylalanine. Positions 2–56 (AAAAELKLLEKSLGLRPGNKYSAQGERQIPVLQTNNGPSLTGLATIATHLVKQAS) are N-terminal. The 124-residue stretch at 50–173 (HLVKQASKEH…FIKNRLYANS (124 aa)) folds into the GST C-terminal domain. The segment at 57 to 63 (KEHLLGS) is linker. Residues 64 to 152 (TAEEKALVQQ…SRWFCHIQHY (89 aa)) form a C-terminal region. Lys138 is modified (N6-acetyllysine). Residues 153–169 (PDIRQHLSSVVFIKNRL) adopt a coiled-coil conformation.

As to quaternary structure, part of a multisubunit complex that groups tRNA ligases for Arg (RARS1), Asp (DARS1), Gln (QARS1), Ile (IARS1), Leu (LARS1), Lys (KARS1), Met (MARS1) the bifunctional ligase for Glu and Pro (EPRS1) and the auxiliary subunits AIMP1/p43, AIMP2/p38 and EEF1E1/p18. Can interact simultaneously with MARS1 and EPRS1. Forms a linear complex that contains MARS1, EEF1E1, EPRS1 and AIMP2 that is at the core of the multisubunit complex. Interacts with ATM and ATR. The interaction with ATM, which takes place independently of TP53, is induced by DNA damage that may occur during genotoxic stress or cell growth. The interaction with ATR is enhanced by UV irradiation.

It is found in the cytoplasm. The protein resides in the nucleus. Functionally, positive modulator of ATM response to DNA damage. In Cricetulus griseus (Chinese hamster), this protein is Eukaryotic translation elongation factor 1 epsilon-1 (EEF1E1).